We begin with the raw amino-acid sequence, 711 residues long: Polyribonucleotide nucleotidyltransferase (711 aa).

Mg(2+) is bound by residues Asp486 and Asp492. In terms of domain architecture, KH spans 553-612; that stretch reads PRIHTIKISTDKIKDVIGKGGSVIRALTEETGTTIEIEDDGTVKIAATDGEKAKYAIRRI. One can recognise an S1 motif domain in the interval 622 to 690; that stretch reads GRIYNGKVTR…RQGRVRLSIK (69 aa). The segment at 690–711 is disordered; sequence KEATEQSQPAAAPEAPASEQAE. Low complexity predominate over residues 694-711; it reads EQSQPAAAPEAPASEQAE.

It belongs to the polyribonucleotide nucleotidyltransferase family. As to quaternary structure, component of the RNA degradosome, which is a multiprotein complex involved in RNA processing and mRNA degradation. The cofactor is Mg(2+).

It is found in the cytoplasm. It carries out the reaction RNA(n+1) + phosphate = RNA(n) + a ribonucleoside 5'-diphosphate. Functionally, involved in mRNA degradation. Catalyzes the phosphorolysis of single-stranded polyribonucleotides processively in the 3'- to 5'-direction. The protein is Polyribonucleotide nucleotidyltransferase of Salmonella choleraesuis (strain SC-B67).